Consider the following 298-residue polypeptide: UDP-3-O-acyl-N-acetylglucosamine deacetylase (298 aa).

Positions 75, 232, and 236 each coordinate Zn(2+). Histidine 259 acts as the Proton donor in catalysis.

It belongs to the LpxC family. The cofactor is Zn(2+).

It carries out the reaction a UDP-3-O-[(3R)-3-hydroxyacyl]-N-acetyl-alpha-D-glucosamine + H2O = a UDP-3-O-[(3R)-3-hydroxyacyl]-alpha-D-glucosamine + acetate. Its pathway is glycolipid biosynthesis; lipid IV(A) biosynthesis; lipid IV(A) from (3R)-3-hydroxytetradecanoyl-[acyl-carrier-protein] and UDP-N-acetyl-alpha-D-glucosamine: step 2/6. Its function is as follows. Catalyzes the hydrolysis of UDP-3-O-myristoyl-N-acetylglucosamine to form UDP-3-O-myristoylglucosamine and acetate, the committed step in lipid A biosynthesis. The sequence is that of UDP-3-O-acyl-N-acetylglucosamine deacetylase from Wolinella succinogenes (strain ATCC 29543 / DSM 1740 / CCUG 13145 / JCM 31913 / LMG 7466 / NCTC 11488 / FDC 602W) (Vibrio succinogenes).